A 370-amino-acid chain; its full sequence is Pyruvate dehydrogenase E1 component subunit alpha (370 aa).

As to quaternary structure, heterodimer of an alpha and a beta chain. Thiamine diphosphate serves as cofactor.

The catalysed reaction is N(6)-[(R)-lipoyl]-L-lysyl-[protein] + pyruvate + H(+) = N(6)-[(R)-S(8)-acetyldihydrolipoyl]-L-lysyl-[protein] + CO2. In terms of biological role, the pyruvate dehydrogenase complex catalyzes the overall conversion of pyruvate to acetyl-CoA and CO(2). It contains multiple copies of three enzymatic components: pyruvate dehydrogenase (E1), dihydrolipoamide acetyltransferase (E2) and lipoamide dehydrogenase (E3). The polypeptide is Pyruvate dehydrogenase E1 component subunit alpha (pdhA) (Staphylococcus aureus (strain COL)).